The following is a 39-amino-acid chain: Natriuretic peptide CnNP-b (39 aa).

The propeptide occupies 1 to 8 (SGSKTATK). The cysteines at positions 12 and 28 are disulfide-linked. The tract at residues 20–39 (IGSTSGMGCGGVPKPTPGGS) is disordered.

It belongs to the natriuretic peptide family. Expressed by the venom gland.

It is found in the secreted. Snake venom natriuretic peptide that targets both NPR1 and NPR2. Exhibits hypotensive and vasodepressor activities. This is Natriuretic peptide CnNP-b from Cryptophis nigrescens (Eastern small-eyed snake).